We begin with the raw amino-acid sequence, 268 residues long: Lipase (268 aa).

The N-terminal stretch at Met1–Gln34 is a signal peptide. The active-site Nucleophile is the Ser44. Disulfide bonds link Cys61–Cys86, Cys127–Cys135, and Cys185–Cys232. His250 is an active-site residue.

Monomer.

It is found in the secreted. It carries out the reaction a triacylglycerol + H2O = a diacylglycerol + a fatty acid + H(+). The catalysed reaction is hexadecanoyl-CoA + H2O = hexadecanoate + CoA + H(+). Inhibited by 3,4-dichloroisocoumarin and tetrahydrolipstatin in the absence of substrate, but by phenylmethylsulfonyl fluoride (PMSF) only in the presence of substrate. Several water-miscible solvents enhance the lipase hydrolytic activity in vitro. Tetrahydrofuran and N,N-dimethylformamide (both 50%) inactivate the enzyme with t1/2 of 5 minutes and t1/2 of 2 hours, respectively. Its function is as follows. Catalyzes the hydrolysis of p-nitrophenyl esters, alpha- and beta-naphthyl esters, and triacylglycerols, with a preference for medium acyl chain length (C8-C12). Shows a much higher hydrolysis rate of glycerol esters of unsaturated C16 and C18 fatty acids than that of their saturated counterparts, and a preference for cis double bond. Is also able to hydrolyze several natural oils and Tween detergents. Also displays thioesterase and phospholipase activities, towards palmitoyl-coenzyme A and diheptanoyl glycerophosphocholine, respectively. Shows transesterification activity of racemic 1-phenyl ethanol with vinyl acetate in hexane, proceeding with partial (R)-enantioselectivity. The sequence is that of Lipase from Streptomyces rimosus.